The primary structure comprises 132 residues: MTMTDPLGDMLTRIRNGAARRKSSVSTPASSLRARVLDVLQSEGYIRGYSKVDFENGKAEFTIELKYYEGASVIREIGRVSKPGRRVYVSVKSIPQVANGLGITILSTPKGVMADHQAREQNVGGEVLCSVF.

The protein belongs to the universal ribosomal protein uS8 family. As to quaternary structure, part of the 30S ribosomal subunit. Contacts proteins S5 and S12.

Functionally, one of the primary rRNA binding proteins, it binds directly to 16S rRNA central domain where it helps coordinate assembly of the platform of the 30S subunit. The protein is Small ribosomal subunit protein uS8 of Agrobacterium fabrum (strain C58 / ATCC 33970) (Agrobacterium tumefaciens (strain C58)).